A 254-amino-acid chain; its full sequence is uncharacterized protein (254 aa).

The next 8 helical transmembrane spans lie at 41–61 (VFVF…IKII), 64–84 (IFQA…EYFF), 91–111 (IYCG…LYIL), 125–145 (ILIG…FVLA), 146–166 (PAAL…LWSF), 172–192 (FILL…IQLL), 204–224 (MLLA…VLTP), and 232–252 (IIMS…LFLL).

This sequence belongs to the TatC family.

It is found in the plastid. Its subcellular location is the chloroplast membrane. This is an uncharacterized protein from Porphyra purpurea (Red seaweed).